The primary structure comprises 333 residues: Serine racemase (333 aa).

Mg(2+) is bound at residue Glu13. ATP contacts are provided by Ser31, Ser32, Ile33, Lys51, and Thr52. Lys56 functions as the Proton acceptor in the catalytic mechanism. Lys56 bears the N6-(pyridoxal phosphate)lysine mark. Pro69 provides a ligand contact to Ca(2+). Residue Thr71 is modified to Phosphothreonine. Thr81 lines the Ca(2+) pocket. Ser84 serves as the catalytic Proton acceptor. Asn86 provides a ligand contact to pyridoxal 5'-phosphate. Gln89 is an ATP binding site. An S-nitrosocysteine modification is found at Cys113. Position 121 (Tyr121) interacts with ATP. Residue Asn154 participates in pyridoxal 5'-phosphate binding. Residue Asp178 coordinates Mg(2+). Pyridoxal 5'-phosphate is bound by residues Gly185, Gly186, Gly187, Gly188, and Met189. 4 residues coordinate Mg(2+): Glu210, Ala214, Asp216, and Asn247. Glu210, Ala214, Asp216, and Asn247 together coordinate Ca(2+). 3 residues coordinate Mn(2+): Glu210, Ala214, and Asp216. Residue Lys279 participates in ATP binding. Ser313 lines the pyridoxal 5'-phosphate pocket. Asn316 provides a ligand contact to ATP.

It belongs to the serine/threonine dehydratase family. As to quaternary structure, homodimer. The cofactor is Mg(2+). It depends on Mn(2+) as a cofactor. Requires Ca(2+) as cofactor. Pyridoxal 5'-phosphate serves as cofactor. Post-translationally, S-nitrosylated, leading to decrease the enzyme activity. As to expression, expressed in the cerebellum and frontal cortex (at protein level).

The catalysed reaction is L-serine = D-serine. It catalyses the reaction D-serine = pyruvate + NH4(+). It carries out the reaction L-serine = pyruvate + NH4(+). Its activity is regulated as follows. Allosterically activated by magnesium, and possibly also other divalent metal cations. Allosterically activated by ATP, ADP or GTP. Competitively inhibited by malonate. Its function is as follows. Catalyzes the synthesis of D-serine from L-serine. D-serine is a key coagonist with glutamate at NMDA receptors. Has dehydratase activity towards both L-serine and D-serine. The polypeptide is Serine racemase (Srr) (Rattus norvegicus (Rat)).